The primary structure comprises 498 residues: Hexokinase-1 (498 aa).

Residues 4-24 (AAVGAAVVCTAAVCAAAAVLV) traverse the membrane as a helical segment. The region spanning 35–487 (GRVMAILKEL…SGIGAALLAA (453 aa)) is the Hexokinase domain. A hexokinase small subdomain region spans residues 90–228 (TGDEHGLFYA…GVDMRVTALV (139 aa)). ADP contacts are provided by Gly-104, Thr-105, and Asn-106. Positions 194, 195, 229, and 230 each coordinate D-glucose. Positions 229–476 (NDTVGTLAGG…ETIVIEHSND (248 aa)) are hexokinase large subdomain. ADP is bound at residue Thr-253. Residues Asn-256, Glu-284, and Glu-315 each coordinate D-glucose. ADP is bound at residue Gly-441.

Belongs to the hexokinase family.

It localises to the plastid. The protein resides in the chloroplast outer membrane. It catalyses the reaction a D-hexose + ATP = a D-hexose 6-phosphate + ADP + H(+). The catalysed reaction is D-fructose + ATP = D-fructose 6-phosphate + ADP + H(+). The enzyme catalyses D-glucose + ATP = D-glucose 6-phosphate + ADP + H(+). Its pathway is carbohydrate metabolism; hexose metabolism. It functions in the pathway carbohydrate degradation; glycolysis; D-glyceraldehyde 3-phosphate and glycerone phosphate from D-glucose: step 1/4. Fructose and glucose phosphorylating enzyme. This Spinacia oleracea (Spinach) protein is Hexokinase-1 (HXK1).